A 986-amino-acid polypeptide reads, in one-letter code: Anoctamin-1 (986 aa).

Over 1–333 (MRVNEKYSTL…FGEKIGLYFA (333 aa)) the chain is Cytoplasmic. The disordered stretch occupies residues 79–121 (LVRRVQHSDTPSGARSVKQDHPLPGKGASLDAGSGEPPMDYHE). S107 and S196 each carry phosphoserine. A helical membrane pass occupies residues 334–354 (WLGVYTQMLIPASIVGIIVFL). The Extracellular segment spans residues 355 to 406 (YGCATMDENIPSMEMCDQRHNITMCPLCDKTCSYWKMSSACATARASHLFDN). Disulfide bonds link C370-C395, C379-C862, C382-C386, and C651-C656. A helical membrane pass occupies residues 407 to 427 (PATVFFSVFMALWAATFMEHW). E425 contacts Ca(2+). The Cytoplasmic portion of the chain corresponds to 428–519 (KRKQMRLNYR…RDRFPAYLTN (92 aa)). A helical transmembrane segment spans residues 520-540 (LVSIIFMIAVTFAIVLGVIIY). The Extracellular segment spans residues 541–568 (RISMAAALAMNSSPSVRSNIRVTVTATA). The helical transmembrane segment at 569 to 589 (VIINLVVIILLDEVYGCIARW) threads the bilayer. The Cytoplasmic portion of the chain corresponds to 590-607 (LTKIEVPKTEKSFEERLI). A helical membrane pass occupies residues 608–628 (FKAFLLKFVNSYTPIFYVAFF). At 629-657 (KGRFVGRPGDYVYIFRSFRMEECAPGGCL) the chain is on the extracellular side. Residues 658–678 (MELCIQLSIIMLGKQLIQNNL) form a helical membrane-spanning segment. Residues N677, E680, E728, E731, E760, and D764 each coordinate Ca(2+). Topologically, residues 679 to 725 (FEIGIPKMKKLIRYLKLKQQSPPDHEECVKRKQRYEVDYNLEPFAGL) are cytoplasmic. Transmembrane regions (helical) follow at residues 726-746 (TPEYMEMIIQFGFVTLFVASF) and 747-767 (PLAPLFALLNNIIEIRLDAKK). Over 768–784 (FVTELRRPVAVRAKDIG) the chain is Cytoplasmic. Residues 785 to 805 (IWYNILRGIGKLAVIINAFVI) form a helical membrane-spanning segment. The Extracellular segment spans residues 806–892 (SFTSDFIPRL…FWAVLAARLA (87 aa)). A glycan (N-linked (GlcNAc...) asparagine) is linked at N832. A helical membrane pass occupies residues 893 to 913 (FVIVFQNLVMFMSDFVDWVIP). D909 and D914 together coordinate Ca(2+). Residues 914–986 (DIPKDISQQI…PSHAYHGGVL (73 aa)) are Cytoplasmic-facing. The span at 951-960 (KERQKDEPPC) shows a compositional bias: basic and acidic residues. Residues 951-986 (KERQKDEPPCNHHNTKACPDSLGSPAPSHAYHGGVL) are disordered.

It belongs to the anoctamin family. In terms of assembly, homodimer. Interacts with CFTR. Interacts with TRPV4. As to expression, expressed in nasal epithelial cells (at protein level). In the kidney, expressed in the collecting duct (at protein level). Broadly expressed with higher levels in liver, skeletal muscle and gastrointestinal muscles. Expressed in eccrine sweat glands.

It is found in the apical cell membrane. The protein localises to the presynapse. The catalysed reaction is chloride(in) = chloride(out). With respect to regulation, ATP and calmodulin are essential for its activation. Channel activity is inhibited by CFTR protein and by chloride inhibitors such as niflumic acid (NFA) and 4,4'-diisothiocyanatostilbene-2,2'-disulfonic acid (DIDS). Activated by heat with activation seen at temperatures above 44 degrees Celsius. Activated by BDNF in radial glial cells. Functionally, calcium-activated chloride channel (CaCC). Plays a role in transepithelial anion transport and smooth muscle contraction. Required for the normal functioning of the interstitial cells of Cajal (ICCs) which generate electrical pacemaker activity in gastrointestinal smooth muscles. Acts as a major contributor to basal and stimulated chloride conductance in airway epithelial cells and plays an important role in tracheal cartilage development. Required for CFTR activation by enhancing endoplasmic reticulum Ca(2+) store release and is also required for CFTR membrane expression. Required for basal and ATP-dependent mucus secretion in airways and intestine, probably by controlling exocytosis of mucus-filled granules by providing Ca(2+) to an apical signaling compartment. Contributes to airway mucus expression induced by interleukins IL3 and IL8 and by the asthma-associated protein CLCA1 and is required for expression of mucin MUC5AC. However, was shown in another study not to be required for MUC5AC expression. Plays a role in the propagation of Ca(2+) waves in Kolliker's organ in the cochlea and contributes to the refinement of auditory brainstem circuitries prior to hearing onset. In vomeronasal sensory neurons, modulates spontaneous firing patterns in the absence of stimuli as well as the firing pattern of pheromone-evoked activity. Responsible for calcium-activated chloride channel activity in type I taste cells of the vallate papillae. Acts as a heat sensor in nociceptive neurons. In dorsal root ganglion neurons, plays a role in mediating non-histaminergic Mas-related G-protein coupled receptor (MRGPR)-dependent itching, acting as a downstream effector of MRGPRs. In the developing brain, required for the Ca(2+)-dependent process extension of radial glial cells. Its function is as follows. Calcium-activated chloride channel (CaCC). Contributes to calcium-activated chloride secretion in human sweat gland epithelial cells. Shows increased basal chloride permeability and decreased Ca(2+)-induced chloride permeability. In terms of biological role, calcium-activated chloride channel (CaCC). Shows increased sensitivity to intracellular Ca(2+). In Homo sapiens (Human), this protein is Anoctamin-1 (ANO1).